Here is a 726-residue protein sequence, read N- to C-terminus: Probable dipeptidyl-peptidase 5 (726 aa).

An N-terminal signal peptide occupies residues 1–19; it reads MGALQWLSITAAAASAVSA. Asn-97, Asn-153, Asn-259, Asn-398, Asn-453, and Asn-529 each carry an N-linked (GlcNAc...) asparagine glycan. The active-site Charge relay system is the Ser-564. Asn-611 carries N-linked (GlcNAc...) asparagine glycosylation. Active-site charge relay system residues include Asp-647 and His-679.

This sequence belongs to the peptidase S9C family.

The protein localises to the secreted. In terms of biological role, extracellular dipeptidyl-peptidase which removes N-terminal dipeptides sequentially from polypeptides having unsubstituted N-termini. The sequence is that of Probable dipeptidyl-peptidase 5 (dpp5) from Aspergillus niger.